We begin with the raw amino-acid sequence, 382 residues long: Serine/threonine-protein phosphatase 2A activator 2 (382 aa).

The segment at 363-382 (SHKGVPTLGNRPGIKPIPFD) is disordered.

The protein belongs to the PTPA-type PPIase family.

It is found in the cytoplasm. The catalysed reaction is [protein]-peptidylproline (omega=180) = [protein]-peptidylproline (omega=0). Its function is as follows. PPIases accelerate the folding of proteins. It catalyzes the cis-trans isomerization of proline imidic peptide bonds in oligopeptides. Acts as a regulatory subunit for PP2A-like phosphatases modulating their activity or substrate specificity, probably by inducing a conformational change in the catalytic subunit, a direct target of the PPIase. Can reactivate inactive phosphatase PP2A-phosphatase methylesterase complexes (PP2Ai) in presence of ATP and Mg(2+) by dissociating the inactive form from the complex. The protein is Serine/threonine-protein phosphatase 2A activator 2 (RRD2) of Cryptococcus neoformans var. neoformans serotype D (strain B-3501A) (Filobasidiella neoformans).